The following is a 304-amino-acid chain: Transmembrane protein 178A (304 aa).

The N-terminal stretch at 1 to 25 (MESRGLVTAVSLTLSICSLLLLVTA) is a signal peptide. The Extracellular portion of the chain corresponds to 26 to 186 (IFTDHWYETD…LLHLRRITAG (161 aa)). A glycan (N-linked (GlcNAc...) asparagine) is linked at asparagine 165. The helical transmembrane segment at 187–207 (FLGMAAAVLLCGCIVAAISFF) threads the bilayer. The Cytoplasmic segment spans residues 208–215 (WEESLTQH). Residues 216–236 (VAGLLFLMTGIFCTISLCTYA) form a helical membrane-spanning segment. Residues 237–267 (ASVAYELNRQPKFIYGLPSDVEHGYSWSLFC) lie on the Extracellular side of the membrane. A helical membrane pass occupies residues 268–288 (AWCSLGLIVAAGCLCTAYPFI). Topologically, residues 289-304 (SRTKILHLKFARDSCV) are cytoplasmic.

It belongs to the TMEM178 family.

Its subcellular location is the endoplasmic reticulum membrane. In terms of biological role, may act as a negative regulator of osteoclast differentiation. This chain is Transmembrane protein 178A (tmem178a), found in Xenopus laevis (African clawed frog).